The sequence spans 414 residues: 2,3-diketo-5-methylthiopentyl-1-phosphate enolase (414 aa).

K99 acts as the Proton acceptor in catalysis. Substrate is bound by residues K148, 174 to 177, H265, G338, and 360 to 361; these read KDDE and GG. Positions 174, 176, and 177 each coordinate Mg(2+). K174 bears the N6-carboxylysine mark.

Belongs to the RuBisCO large chain family. Type IV subfamily. In terms of assembly, homodimer. Mg(2+) serves as cofactor.

The catalysed reaction is 5-methylsulfanyl-2,3-dioxopentyl phosphate = 2-hydroxy-5-methylsulfanyl-3-oxopent-1-enyl phosphate. It participates in amino-acid biosynthesis; L-methionine biosynthesis via salvage pathway; L-methionine from S-methyl-5-thio-alpha-D-ribose 1-phosphate: step 3/6. In terms of biological role, catalyzes the enolization of 2,3-diketo-5-methylthiopentyl-1-phosphate (DK-MTP-1-P) into 2-hydroxy-3-keto-5-methylthiopentenyl-1-phosphate (HK-MTPenyl-1-P). In Bacillus mycoides (strain KBAB4) (Bacillus weihenstephanensis), this protein is 2,3-diketo-5-methylthiopentyl-1-phosphate enolase.